The primary structure comprises 1935 residues: Rho GTPase-activating protein 21 (1935 aa).

Residues 1–46 (MATRRATVPEQQQQQPSSPGSEISKNKDGQEQSEMVSPTEEEGFCW) form a disordered region. The PDZ domain occupies 78-163 (HTTVKDEENG…TLELSVMPKD (86 aa)). Disordered stretches follow at residues 212 to 237 (VEVP…TTQP), 339 to 373 (PPSY…PGSH), 413 to 456 (QNTT…QERL), 673 to 718 (TSTS…DSNS), and 862 to 919 (NSKT…DVFS). 3 stretches are compositionally biased toward polar residues: residues 217–237 (SGTS…TTQP), 348–373 (SMFS…PGSH), and 413–429 (QNTT…SSGQ). Composition is skewed to low complexity over residues 441–451 (PQSVQMRQRSV) and 673–685 (TSTS…PAHT). Polar residues predominate over residues 708–718 (SPEANAGDSNS). Positions 863–884 (SKTERSKSCDEGLDDYKDEGKL) are enriched in basic and acidic residues. In terms of domain architecture, PH spans 920–1033 (DSNKEGFLYF…WIKAIQENGN (114 aa)). The segment at 1056 to 1126 (TMMSSSSNKS…KGSWRRIMKK (71 aa)) is disordered. Low complexity predominate over residues 1059-1072 (SSSSNKSEQSPKPS). The span at 1097 to 1119 (PKQESERRLFSKDDISPPKDKGS) shows a compositional bias: basic and acidic residues. One can recognise a Rho-GAP domain in the interval 1140–1332 (VRLDDCPPAH…TLIQQHDWFF (193 aa)). Disordered stretches follow at residues 1341–1393 (ITAV…GSGK), 1411–1431 (RKRK…ELDN), 1488–1510 (SEAT…RLPP), 1525–1548 (SMSD…KPKV), 1637–1665 (HRSK…SITP), 1688–1733 (SIRQ…EPEE), and 1838–1925 (SELS…SGTQ). A compositionally biased stretch (polar residues) spans 1345 to 1355 (QEESTVESQPV). Over residues 1376–1393 (SDSASDSAKSKGSWGSGK) the composition is skewed to low complexity. Polar residues-rich tracts occupy residues 1525–1543 (SMSD…SAQR) and 1646–1662 (RNVQ…TEGS). Basic and acidic residues predominate over residues 1691–1705 (QKTDSECSAESKNEE). 2 stretches are compositionally biased toward polar residues: residues 1872-1889 (QVST…SQGT) and 1898-1911 (NGDS…NNFS).

The protein localises to the golgi apparatus membrane. Its subcellular location is the cell junction. It is found in the cytoplasmic vesicle membrane. The protein resides in the cytoplasm. It localises to the cytoskeleton. Functionally, GTPase-activating protein (GAP) for rhoa and cdc42. The protein is Rho GTPase-activating protein 21 (arhgap21) of Xenopus tropicalis (Western clawed frog).